We begin with the raw amino-acid sequence, 228 residues long: Cytidylate kinase (228 aa).

17-25 contributes to the ATP binding site; the sequence is GPTASGKGT.

Belongs to the cytidylate kinase family. Type 1 subfamily.

The protein localises to the cytoplasm. The catalysed reaction is CMP + ATP = CDP + ADP. The enzyme catalyses dCMP + ATP = dCDP + ADP. The protein is Cytidylate kinase of Burkholderia vietnamiensis (strain G4 / LMG 22486) (Burkholderia cepacia (strain R1808)).